The primary structure comprises 213 residues: Methylthioribulose-1-phosphate dehydratase (213 aa).

Zn(2+) contacts are provided by histidine 104 and histidine 106.

Belongs to the aldolase class II family. MtnB subfamily. The cofactor is Zn(2+).

It catalyses the reaction 5-(methylsulfanyl)-D-ribulose 1-phosphate = 5-methylsulfanyl-2,3-dioxopentyl phosphate + H2O. Its pathway is amino-acid biosynthesis; L-methionine biosynthesis via salvage pathway; L-methionine from S-methyl-5-thio-alpha-D-ribose 1-phosphate: step 2/6. Its function is as follows. Catalyzes the dehydration of methylthioribulose-1-phosphate (MTRu-1-P) into 2,3-diketo-5-methylthiopentyl-1-phosphate (DK-MTP-1-P). The protein is Methylthioribulose-1-phosphate dehydratase of Stenotrophomonas maltophilia (strain K279a).